The primary structure comprises 482 residues: Aspartyl/glutamyl-tRNA(Asn/Gln) amidotransferase subunit B (482 aa).

This sequence belongs to the GatB/GatE family. GatB subfamily. As to quaternary structure, heterotrimer of A, B and C subunits.

The catalysed reaction is L-glutamyl-tRNA(Gln) + L-glutamine + ATP + H2O = L-glutaminyl-tRNA(Gln) + L-glutamate + ADP + phosphate + H(+). It carries out the reaction L-aspartyl-tRNA(Asn) + L-glutamine + ATP + H2O = L-asparaginyl-tRNA(Asn) + L-glutamate + ADP + phosphate + 2 H(+). Functionally, allows the formation of correctly charged Asn-tRNA(Asn) or Gln-tRNA(Gln) through the transamidation of misacylated Asp-tRNA(Asn) or Glu-tRNA(Gln) in organisms which lack either or both of asparaginyl-tRNA or glutaminyl-tRNA synthetases. The reaction takes place in the presence of glutamine and ATP through an activated phospho-Asp-tRNA(Asn) or phospho-Glu-tRNA(Gln). This Thermotoga sp. (strain RQ2) protein is Aspartyl/glutamyl-tRNA(Asn/Gln) amidotransferase subunit B.